Consider the following 1173-residue polypeptide: Clustered mitochondria protein homolog (1173 aa).

Positions 1 to 21 (MSTIDLPTSSLPGSSGDPSGT) are enriched in low complexity. A disordered region spans residues 1-25 (MSTIDLPTSSLPGSSGDPSGTEMSH). The Clu domain occupies 316-565 (VPHRADLSRT…SLFPLDAQFL (250 aa)). The segment at 888–910 (KFTGKKGNKKKRNLGKSQNTTNR) is disordered. Over residues 890–901 (TGKKGNKKKRNL) the composition is skewed to basic residues. A TPR repeat occupies 984-1017 (ARAYCQLAMIYHQLEKKEEAVELARKAVIVCERF).

This sequence belongs to the CLU family. In terms of assembly, may associate with the eukaryotic translation initiation factor 3 (eIF-3) complex.

It is found in the cytoplasm. Functionally, mRNA-binding protein involved in proper cytoplasmic distribution of mitochondria. In Schizosaccharomyces pombe (strain 972 / ATCC 24843) (Fission yeast), this protein is Clustered mitochondria protein homolog.